Reading from the N-terminus, the 70-residue chain is DNA gyrase inhibitor YacG (70 aa).

Zn(2+)-binding residues include Cys9, Cys12, Cys28, and Cys32. The disordered stretch occupies residues 43 to 70 (ESRKIPGSSIDPESIVTSNNKQDNEDEQ).

This sequence belongs to the DNA gyrase inhibitor YacG family. In terms of assembly, interacts with GyrB. Zn(2+) is required as a cofactor.

Inhibits all the catalytic activities of DNA gyrase by preventing its interaction with DNA. Acts by binding directly to the C-terminal domain of GyrB, which probably disrupts DNA binding by the gyrase. The protein is DNA gyrase inhibitor YacG of Legionella pneumophila (strain Paris).